Here is a 424-residue protein sequence, read N- to C-terminus: Satellite RNA 48 kDa protein (424 aa).

A disordered region spans residues 15–78; sequence TQTRPRIVPK…SNNPGRPSRK (64 aa). 2 stretches are compositionally biased toward polar residues: residues 31–42 and 62–73; these read RTYSRPRSSLSD and NGSQGRCSNNPG.

It belongs to the nepovirus satellite RNA 48 kDa protein family.

In Allium porrum (Leek), this protein is Satellite RNA 48 kDa protein.